Here is a 440-residue protein sequence, read N- to C-terminus: MKLWGGRFKEEESKLMEDFNSSLSFDKKLYYEDIKGSIAHVKMLTNQNIIKEEEKEKILLGLEEILKEIDEGILKIEGDYEDIHSFVEINLINKIGNVGKKLHTGRSRNDQVALDMKLYAKKSTEEVIECLKELMDSLIKVGNENNYIMPGYTHLQRAQVVTFRYHLLAYFEMFKRDEKRLENALEILNESPLGSGALAGSTYNIDKEYTAKLLGFRKPVDNFLDGVSDRDYIIELISKFSIIMMHLSRLSEELILWSSSEFRFIQIGDAYSTGSSIMPQKKNPDGAELIRGKIGRVYGDLISILTVMKSLPLAYNKDMQEDKEPFFDAKDTVISCLKVMEGIISTLKVNKENLMKSVKKGFLNATEAADYLVNKGMAFRDAHKVIGEVVIYCEDKNSAIEDLSLEELKQFSDLFCEDIYEFIDYKNSINKGIKKEMGYF.

The protein belongs to the lyase 1 family. Argininosuccinate lyase subfamily.

The protein resides in the cytoplasm. The catalysed reaction is 2-(N(omega)-L-arginino)succinate = fumarate + L-arginine. It participates in amino-acid biosynthesis; L-arginine biosynthesis; L-arginine from L-ornithine and carbamoyl phosphate: step 3/3. The sequence is that of Argininosuccinate lyase from Clostridium botulinum (strain ATCC 19397 / Type A).